The chain runs to 344 residues: Follistatin (344 aa).

An N-terminal signal peptide occupies residues 1–29 (MARPRHQPGGLCLLLLLLCQFMEDRSAQA). The region spanning 30–103 (GNCWLRQAKN…TCENVDCGPG (74 aa)) is the TB domain. Disulfide bonds link Cys-32-Cys-55, Cys-42-Cys-88, Cys-56-Cys-91, Cys-95-Cys-106, Cys-100-Cys-116, Cys-118-Cys-150, Cys-122-Cys-143, Cys-132-Cys-164, Cys-168-Cys-179, Cys-173-Cys-189, Cys-192-Cys-225, Cys-196-Cys-218, Cys-207-Cys-239, Cys-245-Cys-256, Cys-250-Cys-267, Cys-270-Cys-302, Cys-274-Cys-295, and Cys-284-Cys-316. The region spanning 94–117 (TCENVDCGPGKKCRMNKKNKPRCV) is the Follistatin-like 1 domain. In terms of domain architecture, Kazal-like 1 spans 112 to 166 (NKPRCVCAPDCSNITWKGLVCGLDGKTYRNECALLKARCKEQPELQVQYQGKCKK). N-linked (GlcNAc...) asparagine glycosylation is present at Asn-124. The region spanning 167–190 (TCRDVFCPGSSTCVVDQTNNAYCV) is the Follistatin-like 2 domain. In terms of domain architecture, Kazal-like 2 spans 186–241 (NAYCVTCNRICPEPTSSEQYLCGNDGVTYPSACHLRKATCLLGRSIGLAYEGKCIK). One can recognise a Follistatin-like 3 domain in the interval 244 to 268 (SCDDIQCTGGKKCLWDFKVGRGRCS). Residues 261 to 318 (KVGRGRCSLCGELCPESKSEEPVCASDNATYASECAMKEAACSSGVLLEVKHSGSCNS) form the Kazal-like 3 domain. N-linked (GlcNAc...) asparagine glycosylation is present at Asn-288. The interval 316 to 344 (CNSISEDTEDEEEDEDQDYSFPISSILEW) is disordered. Residues 321-333 (EDTEDEEEDEDQD) are compositionally biased toward acidic residues.

As to quaternary structure, monomer.

The protein resides in the secreted. In terms of biological role, binds directly to activin and functions as an activin antagonist. Specific inhibitor of the biosynthesis and secretion of pituitary follicle stimulating hormone (FSH). The chain is Follistatin from Bubalus bubalis (Domestic water buffalo).